The primary structure comprises 209 residues: uncharacterized protein (209 aa).

The N-terminal stretch at 1 to 19 is a signal peptide; that stretch reads MGYFPYLAVFVCLLASGDA. N-linked (GlcNAc...) asparagine glycosylation is found at Asn-41 and Asn-109.

As to expression, component of the acid-soluble organic matrix of prismatic shell layers (at protein level).

The protein localises to the secreted. This is an uncharacterized protein from Haliotis asinina (Donkey's ear abalone).